Consider the following 667-residue polypeptide: Transmembrane 9 superfamily member 1 (667 aa).

An N-terminal signal peptide occupies residues 1–22 (MIYKMAHVQLLLLYFFVSTVKA). Over 23–302 (FYLPGVAPTT…DKYLHVYDPS (280 aa)) the chain is Lumenal. Residues Asn61 and Asn282 are each glycosylated (N-linked (GlcNAc...) asparagine). A helical transmembrane segment spans residues 303–323 (IQWFSLINFSLVVVLLSSVVI). The Cytoplasmic segment spans residues 324–370 (HSLLRALKSDFARYNELNLDDDFQEDSGWKLNHGDVFRSPSQSLTLS). Residues 371–391 (ILVGSGVQLFLMVTCSIFFAA) form a helical membrane-spanning segment. The Lumenal segment spans residues 392–405 (LGFLSPSSRGSLAT). Residues 406–426 (VMFILYALFGFVGSYTSMGIY) traverse the membrane as a helical segment. The Cytoplasmic segment spans residues 427-442 (KFFNGPYWKANLILTP). The helical transmembrane segment at 443–463 (LLVPGAILLIIIALNFFLMFV) threads the bilayer. Residues 464-474 (HSSGVIPASTL) are Lumenal-facing. Residues 475–495 (FFMVFLWFLFSIPLSFAGSLI) traverse the membrane as a helical segment. Residues 496-527 (ARKRCHWDEHPTKTNQIARQIPFQPWYLKTIP) are Cytoplasmic-facing. Residues 528–548 (ATLIAGIFPFGSIAVELYFIY) form a helical membrane-spanning segment. Residues 549–560 (TSLWFNKIFYMF) lie on the Lumenal side of the membrane. Residues 561 to 581 (GFLFFSFLLLTLTSSLVTILI) form a helical membrane-spanning segment. The Cytoplasmic segment spans residues 582 to 596 (TYHSLCLENWKWQWR). Residues 597-617 (GFIIGGAGCALYVFIHSILFT) form a helical membrane-spanning segment. Topologically, residues 618-635 (KFKLGGFTTIVLYVGYSS) are lumenal. A helical transmembrane segment spans residues 636–656 (VISLLCCLVTGSIGFISSMLF). At 657 to 667 (VRKIYSSIKVD) the chain is on the cytoplasmic side.

This sequence belongs to the nonaspanin (TM9SF) (TC 9.A.2) family.

The protein resides in the endosome membrane. Its subcellular location is the vacuole membrane. In terms of biological role, with TMN2 and TMN3, plays a critical role in the late stages of a nutrient-controlled pathway notably regulating FLO11 gene expression. Acts downstream of RAS2 and TOR. Essential for cell adhesion and filamentous growth. May play a role as effector of cellular copper homeostasis. The sequence is that of Transmembrane 9 superfamily member 1 (EMP70) from Saccharomyces cerevisiae (strain ATCC 204508 / S288c) (Baker's yeast).